A 557-amino-acid polypeptide reads, in one-letter code: MAILNDPPSSTTILSLHTPDVPPPSKPTPATTSHPQDSRNPRNLTSKWPTAIDLAGSSLPCRLEGEVANLVVLGSIPPEINGTFYRVMCDPFVPPHPQNVPIDGDGNISAFRFHNGIVDMKMQYIETERYKLERQANKALFGLYRNPYTHHPCVRAAVDSTANTNLVMWADKLLALKEVGLPYEVDGDTLETLGYDPFASEGVESKTFTAHPKVDPFTDELVVFGYEAKGLATLDVVTYTLDAQGKKVEELWVKSPWCAFIHDCAITENWLILVCWCFEANIERMKKGGQHWAWDYEKPATFIVVPRRKSTPLPDGWKEGESRYYEWNNCMPVHTAGAWEGKDGKLYMESSRVHDNAFPFFPPDDGRMPNPDTKGDFARWEFDLSQPSGSKIQDPLVVLDIPCEFPRIDERFMTKEYEWVFLDVFIPEQGDGKSNIYQGLNGLAMHNNKTNETKYFYAGQDSHVQEPIFIPRSKDSKEGDGWVMAMVERRIANRCDLVVIDTRDFEKAIAIVELPFHIKAQIHGNWVGATETRGTKSLVREMEKIEISGKGALEPMA.

The interval 1-46 (MAILNDPPSSTTILSLHTPDVPPPSKPTPATTSHPQDSRNPRNLTS) is disordered. Piceatannol-binding residues include Tyr144 and Lys177. Tyr144 and Lys177 together coordinate trans-resveratrol. His211, His262, and His334 together coordinate Fe cation. Position 404 (Glu404) interacts with piceatannol. Glu404 serves as a coordination point for trans-resveratrol. Position 523 (His523) interacts with Fe cation.

The protein belongs to the carotenoid oxygenase family. Requires Fe(2+) as cofactor.

It carries out the reaction trans-resveratrol + O2 = 3,5-dihydroxybenzaldehyde + 4-hydroxybenzaldehyde. The catalysed reaction is piceatannol + O2 = 3,5-dihydroxybenzaldehyde + 3,4-dihydroxybenzaldehyde. Its function is as follows. Dioxygenase that cleaves the interphenyl C-alpha-C-beta double bond of resveratrol to yield 3,5-dihydroxybenzaldehyde and 4-hydroxybenzaldehyde. Also cleaves piceatannol, a compound that differs from resveratrol only in the occurrence of an additional hydroxyl group, which leads to the production of 3,4-dihydroxybenzaldehyde and 3,5-hydroxybenzaldehyde. The protein is Resveratrol cleavage oxygenase 1 of Botryotinia fuckeliana (strain B05.10) (Noble rot fungus).